The following is a 368-amino-acid chain: Aminomethyltransferase (368 aa).

Belongs to the GcvT family. As to quaternary structure, the glycine cleavage system is composed of four proteins: P, T, L and H.

The enzyme catalyses N(6)-[(R)-S(8)-aminomethyldihydrolipoyl]-L-lysyl-[protein] + (6S)-5,6,7,8-tetrahydrofolate = N(6)-[(R)-dihydrolipoyl]-L-lysyl-[protein] + (6R)-5,10-methylene-5,6,7,8-tetrahydrofolate + NH4(+). Its function is as follows. The glycine cleavage system catalyzes the degradation of glycine. The polypeptide is Aminomethyltransferase (Xylella fastidiosa (strain M12)).